The sequence spans 427 residues: Dihydroorotase (427 aa).

The Zn(2+) site is built by His57 and His59. Residues 59–61 and Asn91 contribute to the substrate site; that span reads HLR. Residues Asp149, His176, and His229 each contribute to the Zn(2+) site. Asn275 is a binding site for substrate. Position 302 (Asp302) interacts with Zn(2+). Residue Asp302 is part of the active site. Substrate contacts are provided by residues His306 and 320 to 321; that span reads FG.

It belongs to the metallo-dependent hydrolases superfamily. DHOase family. Class I DHOase subfamily. Requires Zn(2+) as cofactor.

It catalyses the reaction (S)-dihydroorotate + H2O = N-carbamoyl-L-aspartate + H(+). The protein operates within pyrimidine metabolism; UMP biosynthesis via de novo pathway; (S)-dihydroorotate from bicarbonate: step 3/3. Functionally, catalyzes the reversible cyclization of carbamoyl aspartate to dihydroorotate. In Shouchella clausii (strain KSM-K16) (Alkalihalobacillus clausii), this protein is Dihydroorotase.